The primary structure comprises 94 residues: Large ribosomal subunit protein bL27 (94 aa).

Residues 1-25 (MAHKKGTGSTRNGRDSQSKRLGVKR) form a disordered region.

The protein belongs to the bacterial ribosomal protein bL27 family.

The sequence is that of Large ribosomal subunit protein bL27 from Gloeothece citriformis (strain PCC 7424) (Cyanothece sp. (strain PCC 7424)).